Consider the following 123-residue polypeptide: uncharacterized protein (123 aa).

Transmembrane regions (helical) follow at residues 7-29 (VKHL…FDAV), 44-66 (FFIH…VHRI), and 79-101 (LGLY…AAMA).

It is found in the cell membrane. This is an uncharacterized protein from Bacillus subtilis (strain 168).